The chain runs to 308 residues: Ceramide synthase 1 LOH3 (308 aa).

6 consecutive transmembrane segments (helical) span residues valine 25–phenylalanine 45, cysteine 82–phenylalanine 102, leucine 128–glutamate 148, phenylalanine 154–cysteine 174, phenylalanine 213–leucine 233, and tyrosine 258–methionine 278. The TLC domain maps to arginine 73–glutamine 287. A phosphoserine mark is found at serine 298 and serine 300.

Expressed ubiquitously at low levels. Not observed in pollen.

It is found in the endoplasmic reticulum membrane. The catalysed reaction is (4R)-hydroxysphinganine + a fatty acyl-CoA = an N-acyl-(4R)-4-hydroxysphinganine + CoA + H(+). The enzyme catalyses a sphingoid base + tetracosanoyl-CoA = an N-tetracosanoyl-sphingoid base + CoA + H(+). It carries out the reaction (4R)-hydroxysphinganine + hexadecanoyl-CoA = N-hexadecanoyl-(4R)-hydroxysphinganine + CoA + H(+). It catalyses the reaction (4R)-hydroxysphinganine + octadecanoyl-CoA = N-octadecanoyl-(4R)-hydroxysphinganine + CoA + H(+). The catalysed reaction is (4R)-hydroxysphinganine + eicosanoyl-CoA = N-eicosanoyl-(4R)-hydroxysphinganine + CoA + H(+). The enzyme catalyses docosanoyl-CoA + (4R)-hydroxysphinganine = N-docosanoyl-(4R)-hydroxysphinganine + CoA + H(+). It carries out the reaction hexacosanoyl-CoA + (4R)-hydroxysphinganine = N-hexacosanoyl-(4R)-hydroxysphinganine + CoA + H(+). It catalyses the reaction tetracosanoyl-CoA + (4R)-hydroxysphinganine = N-tetracosanoyl-(4R)-hydroxysphinganine + CoA + H(+). The catalysed reaction is tetracosanoyl-CoA + sphing-4-enine = N-tetracosanoyl-sphing-4-enine + CoA + H(+). The enzyme catalyses sphinga-(4E,8Z)-dienine + tetracosanoyl-CoA = N-tetracosanoylsphinga-(4E,8Z)-dienine + CoA + H(+). It carries out the reaction sphinga-(4E,8E)-dienine + tetracosanoyl-CoA = N-tetracosanoylsphinga-(4E,8E)-dienine + CoA + H(+). It catalyses the reaction (4R)-hydroxysphing-(8Z)-enine + tetracosanoyl-CoA = N-tetracosanoyl-(4R)-hydroxysphing-(8Z)-enine + CoA + H(+). The catalysed reaction is (4R)-hydroxysphing-(8E)-enine + tetracosanoyl-CoA = N-tetracosanoyl-(4R)-hydroxysphing-(8E)-enine + CoA + H(+). It participates in sphingolipid metabolism. Its activity is regulated as follows. Inhibited by the mycotoxin fumonisin B(1), a sphingosine analog mycotoxins produced by pathogenic fungi. Repressed by divalent cation such as magnesium Mg(2+), copper Cu(2+), zinc Zn(2+), manganese Mn(2+), calcium Ca(2+) and cobalt Co(2+). Essential for plant growth, promotes cell division in root meristems. Catalyzes the biosynthesis of ceramide sphingolipids with C(16) to C(28) fatty acids, structural membrane lipids involved in membrane trafficking (e.g. early endosomes) and cell polarity (e.g. polar auxin transport related proteins); active on a broad substrate spectrum, both regarding chain lengths of fatty acids and the sphingoid base, such as long-chain base (LCB) phytosphingosine (t18:0). Mediates resistance to sphinganine-analog mycotoxins (SAMs, e.g. fumonisin B(1)) by restoring the sphingolipid biosynthesis. Could salvage the transport of GPI-anchored proteins from the endoplasmic reticulum to the Golgi apparatus in ceramides-depleted cells after SAM exposure. Contributes to hypoxic conditions tolerance (e.g. submergences), especially in the dark, by promoting the formation of very-long-chain (VLC) ceramide species (22:1, 24:1 and 26:1) and of VLC unsaturated ceramides, which are modulating CTR1-mediated ethylene signaling leading to endoplasmic reticulum (ER)-to-nucleus translocation of EIN2 and EIN3. The chain is Ceramide synthase 1 LOH3 from Arabidopsis thaliana (Mouse-ear cress).